Here is a 199-residue protein sequence, read N- to C-terminus: N-(5'-phosphoribosyl)anthranilate isomerase (199 aa).

Belongs to the TrpF family.

It catalyses the reaction N-(5-phospho-beta-D-ribosyl)anthranilate = 1-(2-carboxyphenylamino)-1-deoxy-D-ribulose 5-phosphate. It participates in amino-acid biosynthesis; L-tryptophan biosynthesis; L-tryptophan from chorismate: step 3/5. The protein is N-(5'-phosphoribosyl)anthranilate isomerase of Campylobacter jejuni subsp. jejuni serotype O:6 (strain 81116 / NCTC 11828).